We begin with the raw amino-acid sequence, 443 residues long: Adenylate cyclase (443 aa).

Transmembrane regions (helical) follow at residues 47-69 (VLTITAWLAVVVTGSFALMQLAT), 74-93 (WYIALINVFTAVTFAIVPLL), 98-120 (GLVAPLTFIGTAYVAIFAIGWDV), 124-143 (AGAQFFFLVAAALVVLLVGI), 148-167 (LAVGLAAVAAGLVIALEFLV), and 180-202 (SVSFVLTTVSACGVAVATVWFAL). Residues 203 to 443 (RDTARAEAVM…RGAEPRTAGV (241 aa)) are Cytoplasmic-facing. One can recognise a Guanylate cyclase domain in the interval 251–378 (SVLFADIVGF…DAVNVASRME (128 aa)). Mg(2+)-binding residues include D256 and D300.

It belongs to the adenylyl cyclase class-4/guanylyl cyclase family. Homodimer. Can also exist as monomer. Mg(2+) is required as a cofactor. The cofactor is Mn(2+).

Its subcellular location is the cell membrane. It carries out the reaction ATP = 3',5'-cyclic AMP + diphosphate. This chain is Adenylate cyclase (cya), found in Mycobacterium bovis (strain ATCC BAA-935 / AF2122/97).